Reading from the N-terminus, the 321-residue chain is Hex-5-enoyl-[acyl-carrier protein] acetylenase (321 aa).

2 helical membrane passes run 36-56 (FLLY…LLWW) and 62-82 (VEIG…SVGL). The short motif at 83 to 88 (HRYFAH) is the Histidine box-1 element. A helical transmembrane segment spans residues 99 to 119 (VILAILGCMGAQGPVVSWVAV). The Histidine box-2 signature appears at 120-124 (HRRHH). A helical transmembrane segment spans residues 188-208 (YVVWIVLGLLIPTILGGIIHG). The Histidine box-3 motif lies at 269–273 (QNNHH).

This sequence belongs to the fatty acid desaturase type 2 family. Fe(2+) serves as cofactor.

The protein localises to the membrane. The catalysed reaction is 5-hexenoyl-[ACP] + 2 reduced [2Fe-2S]-[ferredoxin] + O2 + 2 H(+) = 5-hexynoyl-[ACP] + 2 oxidized [2Fe-2S]-[ferredoxin] + 2 H2O. The enzyme catalyses hexanoyl-[ACP] + 2 reduced [2Fe-2S]-[ferredoxin] + O2 + 2 H(+) = 5-hexenoyl-[ACP] + 2 oxidized [2Fe-2S]-[ferredoxin] + 2 H2O. Functionally, desaturase involved in the biosynthesis of jamaicamides, which show sodium channel blocking activity and fish toxicity. Catalyzes the conversion of 5-hexenoyl loaded onto the acyl carrier protein JamC (5-hexenoyl-JamC) to 5-hexynoyl-JamC. Can also catalyze the conversion of hexanoyl-JamC to 5-hexenoyl-JamC, but it cannot use free 5-hexenoic acid, 5-hexenoyl-CoA, 2-hexenoyl-JamC, 3-hexenoyl-JamC or 4-hexenoyl-JamC. Is specific for C(6) chains, and cannot use 4-pentenoyl-JamC, 6-heptenoyl-JamC or 7-octenoyl-JamC as substrate. The polypeptide is Hex-5-enoyl-[acyl-carrier protein] acetylenase (Moorena producens (strain JHB)).